The primary structure comprises 49 residues: Large ribosomal subunit protein bL33C (49 aa).

The protein belongs to the bacterial ribosomal protein bL33 family.

This is Large ribosomal subunit protein bL33C from Bacillus pumilus (strain SAFR-032).